The chain runs to 350 residues: MTAVETVLGSITPNLLGRTLTHEHVALDFEHFYRPPPADFESELKAKISMSTLGYVRLYPYSSKENVRFYDEEALEAAKKDVLLYKKHGGGSIVENSSYGLKRNLEFIVELAKSTGVHFIAGTGHYIHAVQDASHASLTVEQMSDLYTKDILTGIEIKGKMVKCGFIGEVASVYPIHEFEKNSIKATGEIQEVLGCGVSFHPHRDAQAPFDIMRLYLEAGGRAQKCVMSHLDRTLFKIEQLVELSELGCYLQYDLFGTECSYYQLNTNVDMISDGQRIENLMKLIEEGLLDRLLMSHDIHTKHRLTSYGGHGYHHIHTNILPRMFARGVTLEQVEQMTVTNPANWLSFDP.

6 residues coordinate a divalent metal cation: His-22, His-24, Glu-169, His-201, His-230, and Asp-298.

It belongs to the metallo-dependent hydrolases superfamily. Phosphotriesterase family. The cofactor is a divalent metal cation.

The polypeptide is Phosphotriesterase-related protein (Drosophila persimilis (Fruit fly)).